Consider the following 635-residue polypeptide: Replication factor C small subunit (635 aa).

51–58 (GPPGTGKT) contributes to the ATP binding site.

The protein belongs to the activator 1 small subunits family. RfcS subfamily. As to quaternary structure, heteromultimer composed of small subunits (RfcS) and large subunits (RfcL). Post-translationally, this protein undergoes a protein self splicing that involves a post-translational excision of the intervening region (intein) followed by peptide ligation.

Part of the RFC clamp loader complex which loads the PCNA sliding clamp onto DNA. This Methanopyrus kandleri (strain AV19 / DSM 6324 / JCM 9639 / NBRC 100938) protein is Replication factor C small subunit (rfcS).